Reading from the N-terminus, the 199-residue chain is Charged multivesicular body protein 1b (199 aa).

2 coiled-coil regions span residues 10–48 and 178–199; these read NLKFAAKELNRNSKRCDKEEKAEKAKIKKAIQKGNMEVA and TSVASAEQDELSQRLARLRDQV. The tract at residues 167–199 is disordered; that stretch reads ELPQGQTGSVGTSVASAEQDELSQRLARLRDQV. Positions 170-182 are enriched in polar residues; it reads QGQTGSVGTSVAS. The short motif at 186 to 196 is the MIT-interacting motif element; that stretch reads DELSQRLARLR.

The protein belongs to the SNF7 family. Probable peripherally associated component of the endosomal sorting required for transport complex III (ESCRT-III).

It is found in the cytoplasm. The protein resides in the cytosol. Its subcellular location is the endosome. It localises to the late endosome membrane. In terms of biological role, probable peripherally associated component of the endosomal sorting required for transport complex III (ESCRT-III) which is involved in multivesicular bodies (MVBs) formation and sorting of endosomal cargo proteins into MVBs. MVBs contain intraluminal vesicles (ILVs) that are generated by invagination and scission from the limiting membrane of the endosome and mostly are delivered to lysosomes enabling degradation of membrane proteins, such as stimulated growth factor receptors, lysosomal enzymes and lipids. This Gallus gallus (Chicken) protein is Charged multivesicular body protein 1b (CHMP1B).